Consider the following 554-residue polypeptide: Phosphomethylpyrimidine synthase (554 aa).

Substrate-binding positions include Asn-191, Met-220, Tyr-249, His-285, 305–307 (SRG), 346–349 (DGLR), and Glu-385. Residue His-389 participates in Zn(2+) binding. Tyr-412 is a binding site for substrate. His-453 contacts Zn(2+). Residues Cys-533, Cys-536, and Cys-541 each contribute to the [4Fe-4S] cluster site.

It belongs to the ThiC family. As to quaternary structure, homodimer. Requires [4Fe-4S] cluster as cofactor.

It carries out the reaction 5-amino-1-(5-phospho-beta-D-ribosyl)imidazole + S-adenosyl-L-methionine = 4-amino-2-methyl-5-(phosphooxymethyl)pyrimidine + CO + 5'-deoxyadenosine + formate + L-methionine + 3 H(+). The protein operates within cofactor biosynthesis; thiamine diphosphate biosynthesis. Its function is as follows. Catalyzes the synthesis of the hydroxymethylpyrimidine phosphate (HMP-P) moiety of thiamine from aminoimidazole ribotide (AIR) in a radical S-adenosyl-L-methionine (SAM)-dependent reaction. This is Phosphomethylpyrimidine synthase from Ehrlichia chaffeensis (strain ATCC CRL-10679 / Arkansas).